The sequence spans 470 residues: Neuraminidase (470 aa).

Over 1–14 (MNPNQKIITIGSVS) the chain is Intravirion. The tract at residues 11 to 32 (GSVSLGLVILSIILHVVSIIVT) is involved in apical transport and lipid raft association. Residues 15 to 35 (LGLVILSIILHVVSIIVTVLV) traverse the membrane as a helical segment. Residues 32–86 (TVLVLSNTGTGLNCNGTIIKEYNETVRVERITQWYNTNIIEYIGRPSNEYYMNNT) form a hypervariable stalk region region. The Virion surface segment spans residues 36–470 (LSNTGTGLNC…AILPFDIDKM (435 aa)). N46, N54, and N84 each carry an N-linked (GlcNAc...) asparagine; by host glycan. Positions 89–470 (LCEAQGFAPF…AILPFDIDKM (382 aa)) are head of neuraminidase. Disulfide bonds link C90–C417, C122–C127, C182–C229, C231–C236, C277–C290, C279–C288, C316–C335, and C421–C446. Substrate is bound at residue R116. N144 is a glycosylation site (N-linked (GlcNAc...) asparagine; by host). D149 acts as the Proton donor/acceptor in catalysis. Residue R150 participates in substrate binding. Residue 275-276 (EE) participates in substrate binding. Residue R291 participates in substrate binding. D292 provides a ligand contact to Ca(2+). N293 is a glycosylation site (N-linked (GlcNAc...) asparagine; by host). Position 296 (G296) interacts with Ca(2+). The N-linked (GlcNAc...) asparagine; by host glycan is linked to N307. Ca(2+) is bound at residue D322. Position 368 (R368) interacts with substrate. N-linked (GlcNAc...) asparagine; by host glycosylation occurs at N398. Y402 acts as the Nucleophile in catalysis. Residue N454 is glycosylated (N-linked (GlcNAc...) asparagine; by host).

Belongs to the glycosyl hydrolase 34 family. Homotetramer. The cofactor is Ca(2+). Post-translationally, N-glycosylated.

It localises to the virion membrane. It is found in the host apical cell membrane. It carries out the reaction Hydrolysis of alpha-(2-&gt;3)-, alpha-(2-&gt;6)-, alpha-(2-&gt;8)- glycosidic linkages of terminal sialic acid residues in oligosaccharides, glycoproteins, glycolipids, colominic acid and synthetic substrates.. Inhibited by the neuraminidase inhibitors zanamivir (Relenza) and oseltamivir (Tamiflu). These drugs interfere with the release of progeny virus from infected cells and are effective against all influenza strains. Resistance to neuraminidase inhibitors is quite rare. In terms of biological role, catalyzes the removal of terminal sialic acid residues from viral and cellular glycoconjugates. Cleaves off the terminal sialic acids on the glycosylated HA during virus budding to facilitate virus release. Additionally helps virus spread through the circulation by further removing sialic acids from the cell surface. These cleavages prevent self-aggregation and ensure the efficient spread of the progeny virus from cell to cell. Otherwise, infection would be limited to one round of replication. Described as a receptor-destroying enzyme because it cleaves a terminal sialic acid from the cellular receptors. May facilitate viral invasion of the upper airways by cleaving the sialic acid moieties on the mucin of the airway epithelial cells. Likely to plays a role in the budding process through its association with lipid rafts during intracellular transport. May additionally display a raft-association independent effect on budding. Plays a role in the determination of host range restriction on replication and virulence. Sialidase activity in late endosome/lysosome traffic seems to enhance virus replication. This chain is Neuraminidase, found in Aves (Horse).